We begin with the raw amino-acid sequence, 293 residues long: Ribosomal protein L11 methyltransferase (293 aa).

S-adenosyl-L-methionine is bound by residues T145, G166, D188, and N230.

This sequence belongs to the methyltransferase superfamily. PrmA family.

The protein resides in the cytoplasm. It carries out the reaction L-lysyl-[protein] + 3 S-adenosyl-L-methionine = N(6),N(6),N(6)-trimethyl-L-lysyl-[protein] + 3 S-adenosyl-L-homocysteine + 3 H(+). Its function is as follows. Methylates ribosomal protein L11. This is Ribosomal protein L11 methyltransferase from Escherichia coli O139:H28 (strain E24377A / ETEC).